A 157-amino-acid polypeptide reads, in one-letter code: Tripartite terminase subunit 2 (157 aa).

Positions 1–69 are disordered; sequence MSWAKQRVPF…DGEDGHALPD (69 aa). Residues 11–27 are compositionally biased toward acidic residues; sequence LDDDDGEEENDVQDDVD.

The protein belongs to the herpesviridae TRM2 protein family. In terms of assembly, associates with TRM1 and TRM3 to form the tripartite terminase complex.

The protein localises to the host nucleus. In terms of biological role, component of the molecular motor that translocates viral genomic DNA in empty capsid during DNA packaging. Forms a tripartite terminase complex together with TRM1 and TRM3 in the host cytoplasm. Once the complex reaches the host nucleus, it interacts with the capsid portal vertex. This portal forms a ring in which genomic DNA is translocated into the capsid. The protein is Tripartite terminase subunit 2 of Homo sapiens (Human).